Consider the following 1850-residue polypeptide: MEPSSPQDEGLRKKQPKKPVPEILPRPPRALFCLTLQNPLRKACISVVEWKPFETIILLTIFANCVALAVYLPMPEDDNNTLNLGLEKLEYFFLIVFSIEAAMKIIAYGFLFHQDAYLRSGWNVLDFIIVFLGVFTAILEQVNIIQTNTAPMSSKGAGLDVKALRAFRVLRPLRLVSGVPSLQVVLNSIFKAMLPLFHIALLVLFMVIIYAIIGLELFKGKMHKTCYFIGTDIVATVENEKPSPCARTGSGRPCTINGSECRGGWPGPNHGITHFDNFGFSMLTVYQCISMEGWTDVLYWVNDAIGNEWPWIYFVTLILLGSFFILNLVLGVLSGEFTKEREKAKSRGTFQKLREKQQLEEDLRGYMSWITQGEVMDVDDLREGKLSLDEGGSDTESLYEIEGLNKIIQFIRHWRQWNRVFRWKCHDLVKSKVFYWLVILIVALNTLSIASEHHNQPLWLTHLQDVANRVLLALFTIEMLMKMYGLGLRQYFMSIFNRFDCFVVCSGILEILLVESGAMTPLGISVLRCIRLLRLFKITKYWTSLSNLVASLLNSIRSIASLLLLLFLFMIIFALLGMQLFGGRYDFEDTEVRRSNFDNFPQALISVFQVLTGEDWNSVMYNGIMAYGGPSYPGVLVCIYFIILFVCGNYILLNVFLAIAVDNLAEAESLTSAQKAKAEERKRRKMSRGLPDKSEEERSTMTKKLEQKPKGEGIPTTAKLKIDEFESNVNEVKDPYPSADFPGDDEEDEPEIPASPRPRPLAELQLKEKAVPIPEASSFFIFSPTNKIRVLCHRIVNATWFTNFILLFILLSSAALAAEDPIRADSMRNQILEYFDYVFTAVFTVEIVLKMTTYGAFLHKGSFCRNYFNILDLLVVAVSLISMGLESSAISVVKILRVLRVLRPLRAINRAKGLKHVVQCVFVAIRTIGNIVLVTTLLQFMFACIGVQLFKGKFYSCNDLSKMTEEECRGYYYIYKDGDPTQIELRPRQWIHNDFHFDNVLSAMMSLFTVSTFEGWPQLLYKAIDSNEEDTGPVYNNRVEMAIFFIIYIILIAFFMMNIFVGFVIVTFQEQGETEYKNCELDKNQRQCVQYALKARPLRCYIPKNPYQYQVWYVVTSSYFEYLMFALIMLNTICLGMQHYNQSEQMNHISDILNVAFTIIFTLEMILKLIAFKPRGYFGDPWNVFDFLIVIGSIIDVILSEIDTLLASSGGLYCLGGGCGNVDPDESARISSAFFRLFRVMRLIKLLSRAEGVRTLLWTFIKSFQALPYVALLIVMLFFIYAVIGMQMFGKIAMVDGTQINRNNNFQTFPQAVLLLFRCATGEAWQEILLACSYGKRCDPESDYAPGEEYACGTNFAYYYFISFYMLCAFLIINLFVAVIMDNFDYLTRDWSILGPHHLDEFKAIWAEYDPEAKGRIKHLDVVTLLRRIQPPLGFGKFCPHRVACKRLVGMNMPLNSDGTVTFNATLFALVRTALKIKTEGNFEQANEELRAIIKKIWKRTSMKLLDQVIPPIGDDEVTVGKFYATFLIQEHFRKFMKRQEEYYGYRPKKDTVQIQAGLRTIEEEAAPEIHRAISGDLTAEEELERAMVEAAMEEGIFRRTGGLFGQVDNFLERTNSLPPVMANQRPLQFAEMEMEELESPVFLEDFPQNPGTHPLARANTNNANANVAYGNSSHRNSPVFSSIRYERELLEEAGRPVTREGPFSQPCSVSGVNSRSHVDKLERQMSQRRMPKGQVPPSPCQLSQEKHPVHEEGKGPRSWSTETSDSESFEERVPRNSAHKCTAPATTMLIQEALVRGGLDSLAADANFVMATGQALADACQMEPEEVEVAATELLKRESPKGGAMPREP.

The tract at residues 1–23 is disordered; it reads MEPSSPQDEGLRKKQPKKPVPEI. The Cytoplasmic portion of the chain corresponds to 1–51; that stretch reads MEPSSPQDEGLRKKQPKKPVPEILPRPPRALFCLTLQNPLRKACISVVEWK. The I repeat unit spans residues 38–337; sequence NPLRKACISV…LVLGVLSGEF (300 aa). The helical transmembrane segment at 52 to 70 threads the bilayer; that stretch reads PFETIILLTIFANCVALAV. At 71-85 the chain is on the extracellular side; the sequence is YLPMPEDDNNTLNLG. The chain crosses the membrane as a helical span at residues 86 to 106; it reads LEKLEYFFLIVFSIEAAMKII. At 107–115 the chain is on the cytoplasmic side; the sequence is AYGFLFHQD. The helical transmembrane segment at 116-136 threads the bilayer; sequence AYLRSGWNVLDFIIVFLGVFT. The Extracellular segment spans residues 137 to 160; the sequence is AILEQVNIIQTNTAPMSSKGAGLD. The helical transmembrane segment at 161 to 179 threads the bilayer; that stretch reads VKALRAFRVLRPLRLVSGV. Over 180–196 the chain is Cytoplasmic; the sequence is PSLQVVLNSIFKAMLPL. A helical transmembrane segment spans residues 197–218; the sequence is FHIALLVLFMVIIYAIIGLELF. At 219–279 the chain is on the extracellular side; sequence KGKMHKTCYF…HGITHFDNFG (61 aa). Disulfide bonds link Cys226/Cys254 and Cys245/Cys261. The segment at residues 280 to 301 is an intramembrane region (pore-forming); the sequence is FSMLTVYQCISMEGWTDVLYWV. A Selectivity filter of repeat I motif is present at residues 290-293; it reads SMEG. Glu292 is a Ca(2+) binding site. The Extracellular segment spans residues 302–309; the sequence is NDAIGNEW. Residues 310 to 330 form a helical membrane-spanning segment; the sequence is PWIYFVTLILLGSFFILNLVL. Residues 331-432 lie on the Cytoplasmic side of the membrane; it reads GVLSGEFTKE…WKCHDLVKSK (102 aa). Residues 357-374 are binding to the beta subunit; it reads QQLEEDLRGYMSWITQGE. Residues Ser393 and Ser397 each carry the phosphoserine modification. The stretch at 418 to 664 is one II repeat; it reads NRVFRWKCHD…VFLAIAVDNL (247 aa). The helical transmembrane segment at 433 to 451 threads the bilayer; that stretch reads VFYWLVILIVALNTLSIAS. Over 452–462 the chain is Extracellular; it reads EHHNQPLWLTH. A helical transmembrane segment spans residues 463-483; it reads LQDVANRVLLALFTIEMLMKM. The Cytoplasmic portion of the chain corresponds to 484–494; it reads YGLGLRQYFMS. A helical membrane pass occupies residues 495–514; the sequence is IFNRFDCFVVCSGILEILLV. At 515 to 523 the chain is on the extracellular side; the sequence is ESGAMTPLG. A helical transmembrane segment spans residues 524 to 542; it reads ISVLRCIRLLRLFKITKYW. The Cytoplasmic portion of the chain corresponds to 543–561; sequence TSLSNLVASLLNSIRSIAS. A helical membrane pass occupies residues 562–581; it reads LLLLLFLFMIIFALLGMQLF. The Extracellular portion of the chain corresponds to 582–601; the sequence is GGRYDFEDTEVRRSNFDNFP. Positions 602–623 form an intramembrane region, pore-forming; sequence QALISVFQVLTGEDWNSVMYNG. The Selectivity filter of repeat II motif lies at 612-615; it reads TGED. Ca(2+) is bound at residue Glu614. Residues 624–633 lie on the Extracellular side of the membrane; sequence IMAYGGPSYP. The chain crosses the membrane as a helical span at residues 634–653; the sequence is GVLVCIYFIILFVCGNYILL. The Cytoplasmic segment spans residues 654–799; it reads NVFLAIAVDN…VLCHRIVNAT (146 aa). Disordered stretches follow at residues 673 to 717 and 731 to 758; these read AQKA…IPTT and EVKD…SPRP. The residue at position 687 (Ser687) is a Phosphoserine; by PKA. Basic and acidic residues predominate over residues 690–711; that stretch reads LPDKSEEERSTMTKKLEQKPKG. The span at 742 to 751 shows a compositional bias: acidic residues; it reads PGDDEEDEPE. The stretch at 786 to 1068 is one III repeat; that stretch reads NKIRVLCHRI…IFVGFVIVTF (283 aa). Residues 800–818 traverse the membrane as a helical segment; that stretch reads WFTNFILLFILLSSAALAA. The Extracellular portion of the chain corresponds to 819-830; that stretch reads EDPIRADSMRNQ. Residues 831–850 traverse the membrane as a helical segment; sequence ILEYFDYVFTAVFTVEIVLK. At 851–866 the chain is on the cytoplasmic side; sequence MTTYGAFLHKGSFCRN. Residues 867–885 traverse the membrane as a helical segment; the sequence is YFNILDLLVVAVSLISMGL. The Extracellular segment spans residues 886–892; that stretch reads ESSAISV. A helical membrane pass occupies residues 893–911; sequence VKILRVLRVLRPLRAINRA. At 912 to 930 the chain is on the cytoplasmic side; that stretch reads KGLKHVVQCVFVAIRTIGN. The helical transmembrane segment at 931 to 950 threads the bilayer; that stretch reads IVLVTTLLQFMFACIGVQLF. The Extracellular portion of the chain corresponds to 951–1000; it reads KGKFYSCNDLSKMTEEECRGYYYIYKDGDPTQIELRPRQWIHNDFHFDNV. A disulfide bond links Cys957 and Cys968. The segment at 988–1077 is dihydropyridine binding; it reads RQWIHNDFHF…FQEQGETEYK (90 aa). Positions 1001 to 1021 form an intramembrane region, pore-forming; sequence LSAMMSLFTVSTFEGWPQLLY. A Selectivity filter of repeat III motif is present at residues 1012-1015; it reads TFEG. A Ca(2+)-binding site is contributed by Glu1014. Topologically, residues 1022 to 1038 are extracellular; sequence KAIDSNEEDTGPVYNNR. A helical membrane pass occupies residues 1039 to 1060; sequence VEMAIFFIIYIILIAFFMMNIF. Over 1061–1118 the chain is Cytoplasmic; sequence VGFVIVTFQEQGETEYKNCELDKNQRQCVQYALKARPLRCYIPKNPYQYQVWYVVTSS. The stretch at 1105-1384 is one IV repeat; it reads NPYQYQVWYV…LFVAVIMDNF (280 aa). The helical transmembrane segment at 1119 to 1140 threads the bilayer; that stretch reads YFEYLMFALIMLNTICLGMQHY. N-linked (GlcNAc...) asparagine glycosylation occurs at Asn1141. The Extracellular portion of the chain corresponds to 1141 to 1148; it reads NQSEQMNH. A helical transmembrane segment spans residues 1149-1170; that stretch reads ISDILNVAFTIIFTLEMILKLI. At 1171–1180 the chain is on the cytoplasmic side; that stretch reads AFKPRGYFGD. The helical transmembrane segment at 1181–1200 threads the bilayer; sequence PWNVFDFLIVIGSIIDVILS. Residues 1201–1231 are Extracellular-facing; it reads EIDTLLASSGGLYCLGGGCGNVDPDESARIS. The helical transmembrane segment at 1232-1250 threads the bilayer; it reads SAFFRLFRVMRLIKLLSRA. Over 1251–1268 the chain is Cytoplasmic; sequence EGVRTLLWTFIKSFQALP. A helical transmembrane segment spans residues 1269–1289; that stretch reads YVALLIVMLFFIYAVIGMQMF. Residues 1290–1311 lie on the Extracellular side of the membrane; sequence GKIAMVDGTQINRNNNFQTFPQ. The segment at residues 1312 to 1330 is an intramembrane region (pore-forming); sequence AVLLLFRCATGEAWQEILL. Positions 1321–1324 match the Selectivity filter of repeat IV motif; sequence TGEA. The Extracellular portion of the chain corresponds to 1331–1356; that stretch reads ACSYGKRCDPESDYAPGEEYACGTNF. The segment at 1337–1403 is dihydropyridine binding; it reads RCDPESDYAP…LGPHHLDEFK (67 aa). A disulfide bridge connects residues Cys1338 and Cys1352. A phenylalkylamine binding region spans residues 1349–1391; it reads EYACGTNFAYYYFISFYMLCAFLIINLFVAVIMDNFDYLTRDW. A helical membrane pass occupies residues 1357–1381; that stretch reads AYYYFISFYMLCAFLIINLFVAVIM. Topologically, residues 1382–1850 are cytoplasmic; the sequence is DNFDYLTRDW…PKGGAMPREP (469 aa). Positions 1522–1542 are interaction with calmodulin; it reads KFYATFLIQEHFRKFMKRQEE. Ser1575 bears the Phosphoserine; by PKA and CAMK2 mark. Thr1579 carries the phosphothreonine modification. Position 1617 is a phosphoserine; by PKA (Ser1617). The tract at residues 1697-1779 is disordered; it reads PVTREGPFSQ…FEERVPRNSA (83 aa). Residues 1706-1716 show a composition bias toward polar residues; sequence QPCSVSGVNSR. Composition is skewed to basic and acidic residues over residues 1717-1726 and 1745-1756; these read SHVDKLERQM and QEKHPVHEEGKG.

Belongs to the calcium channel alpha-1 subunit (TC 1.A.1.11) family. CACNA1S subfamily. As to quaternary structure, component of a calcium channel complex consisting of a pore-forming alpha subunit (CACNA1S) and the ancillary subunits CACNB1 or CACNB2, CACNG1 and CACNA2D1. The channel complex contains alpha, beta, gamma and delta subunits in a 1:1:1:1 ratio, i.e. it contains either CACNB1 or CACNB2. CACNA1S channel activity is modulated by the auxiliary subunits (CACNB1 or CACNB2, CACNG1 and CACNA2D1). Interacts with DYSF and JSRP1. Interacts with RYR1. Interacts with STAC, STAC2 and STAC3 (via their SH3 domains). Interacts with CALM. Post-translationally, the alpha-1S subunit is found in two isoforms in the skeletal muscle: a minor form of 212 kDa containing the complete amino acid sequence, and a major form of 190 kDa derived from the full-length form by post-translational proteolysis close to Phe-1690. In terms of processing, phosphorylated. Phosphorylation by PKA activates the calcium channel. Both the minor and major forms are phosphorylated in vitro by PKA. Phosphorylation at Ser-1575 is involved in beta-adrenergic-mediated regulation of the channel. In terms of tissue distribution, skeletal muscle specific.

It is found in the cell membrane. It localises to the sarcolemma. The protein localises to the T-tubule. The catalysed reaction is Ca(2+)(in) = Ca(2+)(out). Its activity is regulated as follows. Channel activity is blocked by dihydropyridines (DHP), phenylalkylamines, and by benzothiazepines. In terms of biological role, pore-forming, alpha-1S subunit of the voltage-gated calcium channel that gives rise to L-type calcium currents in skeletal muscle. Calcium channels containing the alpha-1S subunit play an important role in excitation-contraction coupling in skeletal muscle via their interaction with RYR1, which triggers Ca(2+) release from the sarcplasmic reticulum and ultimately results in muscle contraction. Long-lasting (L-type) calcium channels belong to the 'high-voltage activated' (HVA) group. The protein is Voltage-dependent L-type calcium channel subunit alpha-1S (Cacna1s) of Rattus norvegicus (Rat).